Reading from the N-terminus, the 428-residue chain is Chaperone SurA (428 aa).

The N-terminal stretch at 1-19 (MNIWKTLLLGMLVTGSAVS) is a signal peptide. PpiC domains follow at residues 170–268 (SVEY…KIED) and 277–377 (VTEV…EVLD).

The protein resides in the periplasm. The catalysed reaction is [protein]-peptidylproline (omega=180) = [protein]-peptidylproline (omega=0). Chaperone involved in the correct folding and assembly of outer membrane proteins. Recognizes specific patterns of aromatic residues and the orientation of their side chains, which are found more frequently in integral outer membrane proteins. May act in both early periplasmic and late outer membrane-associated steps of protein maturation. The sequence is that of Chaperone SurA from Vibrio vulnificus (strain CMCP6).